The sequence spans 207 residues: V-type ATP synthase subunit D (207 aa).

It belongs to the V-ATPase D subunit family.

Functionally, produces ATP from ADP in the presence of a proton gradient across the membrane. The protein is V-type ATP synthase subunit D of Streptococcus gordonii (strain Challis / ATCC 35105 / BCRC 15272 / CH1 / DL1 / V288).